The primary structure comprises 241 residues: Large ribosomal subunit protein uL3 (241 aa).

Disordered stretches follow at residues 139-164 (VSHR…KMPG) and 215-241 (DAPK…QEGA). Gln-151 bears the N5-methylglutamine mark.

The protein belongs to the universal ribosomal protein uL3 family. In terms of assembly, part of the 50S ribosomal subunit. Forms a cluster with proteins L14 and L19. Methylated by PrmB.

In terms of biological role, one of the primary rRNA binding proteins, it binds directly near the 3'-end of the 23S rRNA, where it nucleates assembly of the 50S subunit. The sequence is that of Large ribosomal subunit protein uL3 from Rhodopseudomonas palustris (strain BisB5).